Consider the following 31-residue polypeptide: Cytochrome b6-f complex subunit 6 (31 aa).

The helical transmembrane segment at 4 to 26 (LTSYFGFLLAALTITSALFIGLS) threads the bilayer.

It belongs to the PetL family. The 4 large subunits of the cytochrome b6-f complex are cytochrome b6, subunit IV (17 kDa polypeptide, PetD), cytochrome f and the Rieske protein, while the 4 small subunits are PetG, PetL, PetM and PetN. The complex functions as a dimer.

The protein localises to the plastid. The protein resides in the chloroplast thylakoid membrane. Its function is as follows. Component of the cytochrome b6-f complex, which mediates electron transfer between photosystem II (PSII) and photosystem I (PSI), cyclic electron flow around PSI, and state transitions. PetL is important for photoautotrophic growth as well as for electron transfer efficiency and stability of the cytochrome b6-f complex. The protein is Cytochrome b6-f complex subunit 6 of Aethionema cordifolium (Lebanon stonecress).